Here is a 348-residue protein sequence, read N- to C-terminus: Dihydroorotase (348 aa).

Positions 17 and 19 each coordinate Zn(2+). Residues H19–R21 and N45 each bind substrate. Residues K103, H140, and H178 each contribute to the Zn(2+) site. Residue K103 is modified to N6-carboxylysine. H140 is a substrate binding site. L223 contacts substrate. D251 contributes to the Zn(2+) binding site. D251 is an active-site residue. Substrate contacts are provided by H255 and A267.

It belongs to the metallo-dependent hydrolases superfamily. DHOase family. Class II DHOase subfamily. Homodimer. Zn(2+) serves as cofactor.

It carries out the reaction (S)-dihydroorotate + H2O = N-carbamoyl-L-aspartate + H(+). Its pathway is pyrimidine metabolism; UMP biosynthesis via de novo pathway; (S)-dihydroorotate from bicarbonate: step 3/3. Functionally, catalyzes the reversible cyclization of carbamoyl aspartate to dihydroorotate. In Escherichia coli O7:K1 (strain IAI39 / ExPEC), this protein is Dihydroorotase.